We begin with the raw amino-acid sequence, 357 residues long: 3-isopropylmalate dehydrogenase (357 aa).

Residues Arg97, Arg107, Arg135, and Asp224 each contribute to the substrate site. The Mg(2+) site is built by Asp224, Asp248, and Asp252. 282–294 (GSAPDIAGKNIAN) provides a ligand contact to NAD(+).

It belongs to the isocitrate and isopropylmalate dehydrogenases family. LeuB type 1 subfamily. As to quaternary structure, homodimer. Requires Mg(2+) as cofactor. Mn(2+) serves as cofactor.

Its subcellular location is the cytoplasm. It catalyses the reaction (2R,3S)-3-isopropylmalate + NAD(+) = 4-methyl-2-oxopentanoate + CO2 + NADH. Its pathway is amino-acid biosynthesis; L-leucine biosynthesis; L-leucine from 3-methyl-2-oxobutanoate: step 3/4. Catalyzes the oxidation of 3-carboxy-2-hydroxy-4-methylpentanoate (3-isopropylmalate) to 3-carboxy-4-methyl-2-oxopentanoate. The product decarboxylates to 4-methyl-2 oxopentanoate. This chain is 3-isopropylmalate dehydrogenase, found in Prochlorococcus marinus subsp. pastoris (strain CCMP1986 / NIES-2087 / MED4).